A 349-amino-acid polypeptide reads, in one-letter code: Peptide transport system ATP-binding protein SapD (349 aa).

The region spanning 1-259 (MALLDICNLN…PHHPYTQALI (259 aa)) is the ABC transporter domain. Position 40–47 (40–47 (GESGSGKS)) interacts with ATP.

It belongs to the ABC transporter superfamily.

It localises to the cell inner membrane. In terms of biological role, involved in a peptide intake transport system that plays a role in the resistance to antimicrobial peptides. In Haemophilus influenzae (strain ATCC 51907 / DSM 11121 / KW20 / Rd), this protein is Peptide transport system ATP-binding protein SapD (sapD).